The following is a 625-amino-acid chain: Phosphomethylpyrimidine synthase (625 aa).

Substrate-binding positions include Asn-231, Met-260, Tyr-289, His-325, 345 to 347, 386 to 389, and Glu-425; these read SRG and DGLR. Residue His-429 participates in Zn(2+) binding. Tyr-452 lines the substrate pocket. His-493 is a binding site for Zn(2+). [4Fe-4S] cluster-binding residues include Cys-573, Cys-576, and Cys-581.

The protein belongs to the ThiC family. Homodimer. Requires [4Fe-4S] cluster as cofactor.

The enzyme catalyses 5-amino-1-(5-phospho-beta-D-ribosyl)imidazole + S-adenosyl-L-methionine = 4-amino-2-methyl-5-(phosphooxymethyl)pyrimidine + CO + 5'-deoxyadenosine + formate + L-methionine + 3 H(+). It participates in cofactor biosynthesis; thiamine diphosphate biosynthesis. Catalyzes the synthesis of the hydroxymethylpyrimidine phosphate (HMP-P) moiety of thiamine from aminoimidazole ribotide (AIR) in a radical S-adenosyl-L-methionine (SAM)-dependent reaction. The chain is Phosphomethylpyrimidine synthase from Acinetobacter baumannii (strain AB0057).